Consider the following 210-residue polypeptide: Proteasome subunit beta (210 aa).

Positions 1–9 are cleaved as a propeptide — removed in mature form; by autocatalysis; that stretch reads MIHDKVFKG. Thr10 functions as the Nucleophile in the catalytic mechanism.

It belongs to the peptidase T1B family. The 20S proteasome core is composed of 14 alpha and 14 beta subunits that assemble into four stacked heptameric rings, resulting in a barrel-shaped structure. The two inner rings, each composed of seven catalytic beta subunits, are sandwiched by two outer rings, each composed of seven alpha subunits. The catalytic chamber with the active sites is on the inside of the barrel. Has a gated structure, the ends of the cylinder being occluded by the N-termini of the alpha-subunits. Is capped at one or both ends by the proteasome regulatory ATPase, PAN.

The protein localises to the cytoplasm. It carries out the reaction Cleavage of peptide bonds with very broad specificity.. Its activity is regulated as follows. The formation of the proteasomal ATPase PAN-20S proteasome complex, via the docking of the C-termini of PAN into the intersubunit pockets in the alpha-rings, triggers opening of the gate for substrate entry. Interconversion between the open-gate and close-gate conformations leads to a dynamic regulation of the 20S proteasome proteolysis activity. Component of the proteasome core, a large protease complex with broad specificity involved in protein degradation. The polypeptide is Proteasome subunit beta (Ferroglobus placidus (strain DSM 10642 / AEDII12DO)).